A 250-amino-acid chain; its full sequence is Ubiquinone/menaquinone biosynthesis C-methyltransferase UbiE (250 aa).

Residues Thr73, Asp94, 122 to 123 (NA), and Ser139 each bind S-adenosyl-L-methionine.

It belongs to the class I-like SAM-binding methyltransferase superfamily. MenG/UbiE family.

It carries out the reaction a 2-demethylmenaquinol + S-adenosyl-L-methionine = a menaquinol + S-adenosyl-L-homocysteine + H(+). The catalysed reaction is a 2-methoxy-6-(all-trans-polyprenyl)benzene-1,4-diol + S-adenosyl-L-methionine = a 5-methoxy-2-methyl-3-(all-trans-polyprenyl)benzene-1,4-diol + S-adenosyl-L-homocysteine + H(+). The protein operates within quinol/quinone metabolism; menaquinone biosynthesis; menaquinol from 1,4-dihydroxy-2-naphthoate: step 2/2. It functions in the pathway cofactor biosynthesis; ubiquinone biosynthesis. Functionally, methyltransferase required for the conversion of demethylmenaquinol (DMKH2) to menaquinol (MKH2) and the conversion of 2-polyprenyl-6-methoxy-1,4-benzoquinol (DDMQH2) to 2-polyprenyl-3-methyl-6-methoxy-1,4-benzoquinol (DMQH2). This Francisella tularensis subsp. tularensis (strain FSC 198) protein is Ubiquinone/menaquinone biosynthesis C-methyltransferase UbiE.